We begin with the raw amino-acid sequence, 482 residues long: tRNA sulfurtransferase (482 aa).

Residues 61-165 (LAIRDALTRI…DDRLLLIKGR (105 aa)) enclose the THUMP domain. ATP is bound by residues 183–184 (LI), K265, G287, and Q296. Cysteines 344 and 456 form a disulfide. Residues 404-482 (FGPNDVILDI…GFNNVKVYRP (79 aa)) form the Rhodanese domain. The Cysteine persulfide intermediate role is filled by C456.

The protein belongs to the ThiI family.

Its subcellular location is the cytoplasm. It catalyses the reaction [ThiI sulfur-carrier protein]-S-sulfanyl-L-cysteine + a uridine in tRNA + 2 reduced [2Fe-2S]-[ferredoxin] + ATP + H(+) = [ThiI sulfur-carrier protein]-L-cysteine + a 4-thiouridine in tRNA + 2 oxidized [2Fe-2S]-[ferredoxin] + AMP + diphosphate. The enzyme catalyses [ThiS sulfur-carrier protein]-C-terminal Gly-Gly-AMP + S-sulfanyl-L-cysteinyl-[cysteine desulfurase] + AH2 = [ThiS sulfur-carrier protein]-C-terminal-Gly-aminoethanethioate + L-cysteinyl-[cysteine desulfurase] + A + AMP + 2 H(+). It participates in cofactor biosynthesis; thiamine diphosphate biosynthesis. Its function is as follows. Catalyzes the ATP-dependent transfer of a sulfur to tRNA to produce 4-thiouridine in position 8 of tRNAs, which functions as a near-UV photosensor. Also catalyzes the transfer of sulfur to the sulfur carrier protein ThiS, forming ThiS-thiocarboxylate. This is a step in the synthesis of thiazole, in the thiamine biosynthesis pathway. The sulfur is donated as persulfide by IscS. In Escherichia coli (strain ATCC 8739 / DSM 1576 / NBRC 3972 / NCIMB 8545 / WDCM 00012 / Crooks), this protein is tRNA sulfurtransferase.